Here is a 182-residue protein sequence, read N- to C-terminus: Glutathione-regulated potassium-efflux system ancillary protein KefG (182 aa).

It belongs to the NAD(P)H dehydrogenase (quinone) family. KefG subfamily. In terms of assembly, interacts with KefB.

It is found in the cell inner membrane. It catalyses the reaction a quinone + NADH + H(+) = a quinol + NAD(+). The enzyme catalyses a quinone + NADPH + H(+) = a quinol + NADP(+). In terms of biological role, regulatory subunit of a potassium efflux system that confers protection against electrophiles. Required for full activity of KefB. The sequence is that of Glutathione-regulated potassium-efflux system ancillary protein KefG from Yersinia pseudotuberculosis serotype O:1b (strain IP 31758).